The sequence spans 296 residues: Homoserine kinase (296 aa).

Residue 85–95 (PLSRGLGSSAA) participates in ATP binding.

It belongs to the GHMP kinase family. Homoserine kinase subfamily.

It is found in the cytoplasm. The enzyme catalyses L-homoserine + ATP = O-phospho-L-homoserine + ADP + H(+). Its pathway is amino-acid biosynthesis; L-threonine biosynthesis; L-threonine from L-aspartate: step 4/5. Catalyzes the ATP-dependent phosphorylation of L-homoserine to L-homoserine phosphate. This is Homoserine kinase from Clostridium acetobutylicum (strain ATCC 824 / DSM 792 / JCM 1419 / IAM 19013 / LMG 5710 / NBRC 13948 / NRRL B-527 / VKM B-1787 / 2291 / W).